The following is a 273-amino-acid chain: Dermonecrotic toxin LhSicTox-alphaIA2avi (273 aa).

Residue His-5 is part of the active site. The Mg(2+) site is built by Glu-25 and Asp-27. His-41 acts as the Nucleophile in catalysis. 2 disulfide bridges follow: Cys-45–Cys-51 and Cys-47–Cys-190. Residue Asp-85 participates in Mg(2+) binding.

It belongs to the arthropod phospholipase D family. Class II subfamily. The cofactor is Mg(2+). As to expression, expressed by the venom gland.

It localises to the secreted. It catalyses the reaction an N-(acyl)-sphingosylphosphocholine = an N-(acyl)-sphingosyl-1,3-cyclic phosphate + choline. The enzyme catalyses an N-(acyl)-sphingosylphosphoethanolamine = an N-(acyl)-sphingosyl-1,3-cyclic phosphate + ethanolamine. It carries out the reaction a 1-acyl-sn-glycero-3-phosphocholine = a 1-acyl-sn-glycero-2,3-cyclic phosphate + choline. The catalysed reaction is a 1-acyl-sn-glycero-3-phosphoethanolamine = a 1-acyl-sn-glycero-2,3-cyclic phosphate + ethanolamine. Its function is as follows. Dermonecrotic toxins cleave the phosphodiester linkage between the phosphate and headgroup of certain phospholipids (sphingolipid and lysolipid substrates), forming an alcohol (often choline) and a cyclic phosphate. This toxin acts on sphingomyelin (SM). It may also act on ceramide phosphoethanolamine (CPE), lysophosphatidylcholine (LPC) and lysophosphatidylethanolamine (LPE), but not on lysophosphatidylserine (LPS), and lysophosphatidylglycerol (LPG). It acts by transphosphatidylation, releasing exclusively cyclic phosphate products as second products. Induces dermonecrosis, hemolysis, increased vascular permeability, edema, inflammatory response, and platelet aggregation. The sequence is that of Dermonecrotic toxin LhSicTox-alphaIA2avi from Loxosceles hirsuta (Recluse spider).